The primary structure comprises 329 residues: Sex comb on midleg-like protein 1 (329 aa).

Positions 136–160 are disordered; that stretch reads SYSPTLPVSRRENNSPSNLPRPSFC. Phosphoserine is present on residues serine 138 and serine 238. One can recognise an SAM domain in the interval 258-325; it reads WSVEAVVLFL…YYIDRLKQGK (68 aa).

This sequence belongs to the SCM family.

The protein resides in the nucleus. In terms of biological role, putative Polycomb group (PcG) protein. PcG proteins act by forming multiprotein complexes, which are required to maintain the transcriptionally repressive state of homeotic genes throughout development. May be involved in spermatogenesis during sexual maturation. The protein is Sex comb on midleg-like protein 1 (SCML1) of Pongo pygmaeus (Bornean orangutan).